The following is a 426-amino-acid chain: tRNA(Met) cytidine acetate ligase (426 aa).

ATP contacts are provided by residues 7–20, Gly101, Asn168, and Arg193; that span reads VVEY…HLFH.

The protein belongs to the TmcAL family.

It localises to the cytoplasm. It carries out the reaction cytidine(34) in elongator tRNA(Met) + acetate + ATP = N(4)-acetylcytidine(34) in elongator tRNA(Met) + AMP + diphosphate. Catalyzes the formation of N(4)-acetylcytidine (ac(4)C) at the wobble position of elongator tRNA(Met), using acetate and ATP as substrates. First activates an acetate ion to form acetyladenylate (Ac-AMP) and then transfers the acetyl group to tRNA to form ac(4)C34. The polypeptide is tRNA(Met) cytidine acetate ligase (Kosmotoga olearia (strain ATCC BAA-1733 / DSM 21960 / TBF 19.5.1)).